We begin with the raw amino-acid sequence, 156 residues long: Succinate dehydrogenase assembly factor 2-A, mitochondrial (156 aa).

The N-terminal 24 residues, 1–24, are a transit peptide targeting the mitochondrion; the sequence is MLRQFLVSTAVRRVVVPSMAQTRC. The interval 35–62 is disordered; that stretch reads TPGEIVDYDDPPHIPVPEYPSRPDEPLE.

This sequence belongs to the SDHAF2 family. Interacts with the flavoprotein subunit within the SDH catalytic dimer.

The protein localises to the mitochondrion matrix. Its function is as follows. Plays an essential role in the assembly of succinate dehydrogenase (SDH), an enzyme complex (also referred to as respiratory complex II) that is a component of both the tricarboxylic acid (TCA) cycle and the mitochondrial electron transport chain, and which couples the oxidation of succinate to fumarate with the reduction of ubiquinone (coenzyme Q) to ubiquinol. Required for flavinylation (covalent attachment of FAD) of the flavoprotein subunit of the SDH catalytic dimer. This is Succinate dehydrogenase assembly factor 2-A, mitochondrial from Drosophila ananassae (Fruit fly).